A 252-amino-acid polypeptide reads, in one-letter code: Short chain dehydrogenase andC (252 aa).

A signal peptide spans 1 to 25; the sequence is MGFLQDKVVIITGAAAGIGLATATA. NADP(+) is bound by residues isoleucine 11, aspartate 57, and arginine 119. The active-site Proton donor is serine 137. 2 residues coordinate NADP(+): tyrosine 151 and lysine 155. Residue tyrosine 151 is the Proton acceptor of the active site. Lysine 155 serves as the catalytic Lowers pKa of active site Tyr.

It belongs to the short-chain dehydrogenases/reductases (SDR) family.

It participates in secondary metabolite biosynthesis; terpenoid biosynthesis. Short chain dehydrogenase; part of the gene cluster that mediates the biosynthesis of anditomin, a fungal meroterpenoid. The first step of the pathway is the synthesis of 3,5-dimethylorsellinic acid (DMOA) by the polyketide synthase andM. DMOA is then converted to the phthalide compound 5,7-dihydroxy-4,6-dimethylphthalide (DHDMP) by the cytochrome P450 monooxygenase andK, which is further prenylated by the prenyltransferase andD to yield farnesyl-DHDMP. Further epoxidation by the FAD-dependent monooxygenase andE leads to epoxyfarnesyl-DHDMP. The next step involves the terpene cyclase andB that converts epoxyfarnesyl-DHDMP into preandiloid A through opening of the epoxide ring followed by the cyclization of the farnesyl moiety. Preandiloid A is in turn oxidized at the C-3 hydroxyl group to yield preandiloid B by the dehydrogenase andC. The dioxygenase andA is solely responsible for the dehydrogenation of preandiloid B leading to the enone preandiloid C, as well as for the intriguing structural rearrangement to generate the bicyclo[2.2.2]octane core, transforming preandiloid C into andiconin. FAD-binding monooxygenase andJ then produces andilesin D which is reduced by dehydrogenase andI to yield andilesin A. Action of acetyltransferase andG followed by a spontaneous acetate elimination leads then to andilesin B, which is in turn substrate of the short chain dehydrogenase andH to yield andilesin C. Finally, the dioxygenase andF catalyzes the transformation of andilesin C to anditomin. This is Short chain dehydrogenase andC from Emericella variicolor (Aspergillus stellatus).